The primary structure comprises 487 residues: UL37 immediate early glycoprotein (487 aa).

Positions Met-1–Tyr-22 are cleaved as a signal peptide. Residues Gly-83 to Asn-107 are compositionally biased toward acidic residues. A disordered region spans residues Gly-83–Gly-121. 17 N-linked (GlcNAc...) asparagine; by host glycosylation sites follow: Asn-206, Asn-210, Asn-219, Asn-223, Asn-242, Asn-246, Asn-275, Asn-281, Asn-294, Asn-297, Asn-306, Asn-333, Asn-337, Asn-343, Asn-379, Asn-384, and Asn-391. The helical transmembrane segment at Trp-433 to Leu-459 threads the bilayer.

The protein belongs to the immediate early glycoprotein family. As to quaternary structure, interacts with host BAX. Interacts with host RSAD2/viperin; this interaction results in RSAD2/viperin relocalization from the endoplasmic reticulum to the mitochondria, actin cytoskeleton disruption and enhancement of infection. Interacts with host PEX19; this interaction inhibits the peroxisomal-dependent antiviral signaling. Interacts with host CHCHD6; this interaction rewires mitochondria by engaging the conserved MICOS complex.

It localises to the host endoplasmic reticulum membrane. The protein resides in the host Golgi apparatus membrane. Its subcellular location is the host mitochondrion membrane. The protein localises to the host peroxisome. Its function is as follows. Multifunctional transmembrane protein that plays several key roles in viral replication. Rapidely traffics from the host endoplasmic reticulum to the outer mitochondrial membrane where it acts to inhibit host immune response, block apoptotic signaling, regulate calcium flux, and induce mitochondrial fragmentation. Sequesters proapoptotic BAX at the outer mitochondrial membrane and prevents cytochrome c release and subsequent initiation of the proapoptotic cascade. Also provoques a calcium efflux from host endoplasmic reticulum and F-actin cytoskeleton disruption. Participates in the increase of host mitochondrial biogenesis, thus promoting viral replication by efficient use of newly made mitochondria. Additionally, a subset of vMIA localizes to peroxisomes, causing fragmentation and blocking peroxisomal MAVS signaling. Mechanistically, inhibits host MAVS oligomerization at peroxisomes in a mitochondrial fission factors (MFF)-dependent manner and in mitochondria independently of mitochondrial fission factors. Plays an essential role in the trafficking of host viperin/RSAD2 from the endoplasmic reticulum to the viral assembly compartment via the mitochondria during viral infection as failure of viperin to localize to the mitochondria results in insufficient lipogenesis and thus reduces viral replication. In terms of biological role, may play a role in escape from the host antiviral response. This is UL37 immediate early glycoprotein (UL37) from Human cytomegalovirus (strain AD169) (HHV-5).